The sequence spans 32 residues: Photosystem II reaction center protein T (32 aa).

The helical transmembrane segment at 3 to 23 threads the bilayer; that stretch reads ALVYTFLLIGTLMVIFFAVFF.

The protein belongs to the PsbT family. PSII is composed of 1 copy each of membrane proteins PsbA, PsbB, PsbC, PsbD, PsbE, PsbF, PsbH, PsbI, PsbJ, PsbK, PsbL, PsbM, PsbT, PsbX, PsbY, PsbZ, Psb30/Ycf12, at least 3 peripheral proteins of the oxygen-evolving complex and a large number of cofactors. It forms dimeric complexes.

Its subcellular location is the plastid. It is found in the chloroplast thylakoid membrane. In terms of biological role, found at the monomer-monomer interface of the photosystem II (PS II) dimer, plays a role in assembly and dimerization of PSII. PSII is a light-driven water plastoquinone oxidoreductase, using light energy to abstract electrons from H(2)O, generating a proton gradient subsequently used for ATP formation. This Thalassiosira pseudonana (Marine diatom) protein is Photosystem II reaction center protein T.